The primary structure comprises 37 residues: Cytochrome b6-f complex subunit 5 (37 aa).

Residues 5-25 (ILLGIVLGMVVVTLAGLFVAA) traverse the membrane as a helical segment.

The protein belongs to the PetG family. In terms of assembly, the 4 large subunits of the cytochrome b6-f complex are cytochrome b6, subunit IV (17 kDa polypeptide, PetD), cytochrome f and the Rieske protein, while the 4 small subunits are PetG, PetL, PetM and PetN. The complex functions as a dimer.

Its subcellular location is the cellular thylakoid membrane. Its function is as follows. Component of the cytochrome b6-f complex, which mediates electron transfer between photosystem II (PSII) and photosystem I (PSI), cyclic electron flow around PSI, and state transitions. PetG is required for either the stability or assembly of the cytochrome b6-f complex. This Synechococcus sp. (strain JA-2-3B'a(2-13)) (Cyanobacteria bacterium Yellowstone B-Prime) protein is Cytochrome b6-f complex subunit 5.